A 386-amino-acid chain; its full sequence is Alpha-D-kanosaminyltransferase (386 aa).

Belongs to the glycosyltransferase group 1 family.

It carries out the reaction 2'-deamino-2'-hydroxyneamine + UDP-alpha-D-kanosamine = kanamycin A + UDP + H(+). The catalysed reaction is neamine + UDP-alpha-D-kanosamine = kanamycin B + UDP + H(+). It catalyses the reaction paromamine + UDP-alpha-D-kanosamine = kanamycin C + UDP + H(+). The enzyme catalyses 2'-deamino-2'-hydroxyparomamine + UDP-alpha-D-kanosamine = kanamycin X + UDP + H(+). It participates in antibiotic biosynthesis; kanamycin biosynthesis. Its function is as follows. Glycosyltransferase involved in the biosynthesis of kanamycins by catalyzing the transfer of the hexose kanosamine from UDP-alpha-D-kanosamine to disaccharide precursors. Can also use UDP-alpha-D-glucose as sugar donor with much lower efficiency. This Streptomyces kanamyceticus protein is Alpha-D-kanosaminyltransferase (kanE).